The primary structure comprises 65 residues: Ferredoxin-like protein in vnf region (65 aa).

4Fe-4S ferredoxin-type domains lie at 2–29 (AMAIDGYECTVCGDCKPVCPTGSIVLQG) and 30–65 (GIYVIDADSCNECADLGEPRCLGVCPVDFCIQPLDD). [4Fe-4S] cluster is bound by residues Cys10, Cys13, Cys16, Cys20, Cys39, Cys42, Cys50, and Cys54.

[4Fe-4S] cluster is required as a cofactor.

The polypeptide is Ferredoxin-like protein in vnf region (Azotobacter chroococcum mcd 1).